A 484-amino-acid chain; its full sequence is Probable chitinase 2 (484 aa).

The signal sequence occupies residues 1–33 (MTLRSRLSGEAPQLWLLLLLASTASSLWASVAA). Positions 41-432 (KVVVCYVSTW…RTINEATMLA (392 aa)) constitute a GH18 domain. A disulfide bridge connects residues cysteine 45 and cysteine 70. Residues 98-99 (EE) and 125-128 (GGWN) each bind chitin. The active-site Proton donor is the glutamate 168. Residues tyrosine 169, 231 to 234 (MCYD), and tryptophan 384 each bind chitin. The residue at position 467 (serine 467) is a Phosphoserine.

The protein belongs to the glycosyl hydrolase 18 family. Chitinase class II subfamily.

It catalyses the reaction Random endo-hydrolysis of N-acetyl-beta-D-glucosaminide (1-&gt;4)-beta-linkages in chitin and chitodextrins.. The protein is Probable chitinase 2 of Drosophila melanogaster (Fruit fly).